Here is a 184-residue protein sequence, read N- to C-terminus: MSWRSEHIWIELIAGSRKISNFCWAIILFLGSLGFLLIGISSYLDRNLISLFPSQQILFFPQGIVMSFYGLAGLFISSYLWCTISWNVGSGYDRFDRKEGIVCIFRWGFPGKNRRILLRLFMKDIQSIRIEVKEGFYARRVLYMEIRGQGAIPLTRTDENLTPREIEQKAAELAYFLRVPIEVF.

A run of 2 helical transmembrane segments spans residues 22–42 (FCWA…GISS) and 57–77 (ILFF…LFIS).

This sequence belongs to the Ycf4 family.

The protein resides in the plastid. The protein localises to the chloroplast thylakoid membrane. Seems to be required for the assembly of the photosystem I complex. This Populus trichocarpa (Western balsam poplar) protein is Photosystem I assembly protein Ycf4.